The primary structure comprises 66 residues: Large ribosomal subunit protein uL29 (66 aa).

The protein belongs to the universal ribosomal protein uL29 family.

The chain is Large ribosomal subunit protein uL29 from Fervidobacterium nodosum (strain ATCC 35602 / DSM 5306 / Rt17-B1).